The primary structure comprises 281 residues: Cell division protein DivIB (281 aa).

The disordered stretch occupies residues 1 to 36; sequence MARKRITRRDPEEELSKFLRHEPGQGQETRKLSSQL. Over 1–46 the chain is Cytoplasmic; sequence MARKRITRRDPEEELSKFLRHEPGQGQETRKLSSQLTSLKKERRRG. A compositionally biased stretch (basic and acidic residues) spans 8–31; sequence RRDPEEELSKFLRHEPGQGQETRK. A helical transmembrane segment spans residues 47-69; that stretch reads LLTRLGSIMAVCLLAIAFLTYYV. The Extracellular segment spans residues 70–281; that stretch reads SPLADVSTVR…SAEKKAYGLS (212 aa). The 72-residue stretch at 73-144 folds into the POTRA domain; that stretch reads ADVSTVRVLG…NTLNMQVHER (72 aa).

This sequence belongs to the FtsQ/DivIB family. DivIB subfamily.

The protein resides in the cell membrane. In terms of biological role, cell division protein that may be involved in stabilizing or promoting the assembly of the division complex. In Lactobacillus delbrueckii subsp. bulgaricus (strain ATCC 11842 / DSM 20081 / BCRC 10696 / JCM 1002 / NBRC 13953 / NCIMB 11778 / NCTC 12712 / WDCM 00102 / Lb 14), this protein is Cell division protein DivIB.